The primary structure comprises 290 residues: MRFDEAYSGKVFIKSHPSFEESKVVIYGMPMDWTVSYRPGSRFGPARIREVSIGLEEYSPYLDRELEEVKYFDAGDIPLPFGNAQRSLDMIEEYVSKLLDADKFPLGLGGEHLVSWPIFKAMAKKYPDLAIIHMDAHTDLRESYEGEPLSHSTPIRKVCDLIGPENVYSFGIRSGMKEEFEWAKEVGMNLYKFDVLEPLKEVLPKLAGRPVYVTIDIDVLDPAHAPGTGTLEAGGITSKELLDSIVAIANSNINVVGADLVEVAPVYDHSDQTPVAASKFVREMLLGWVK.

Mn(2+) contacts are provided by histidine 112, aspartate 135, histidine 137, aspartate 139, aspartate 216, and aspartate 218.

This sequence belongs to the arginase family. Agmatinase subfamily. The cofactor is Mn(2+).

The enzyme catalyses agmatine + H2O = urea + putrescine. It participates in amine and polyamine biosynthesis; putrescine biosynthesis via agmatine pathway; putrescine from agmatine: step 1/1. Its function is as follows. Catalyzes the formation of putrescine from agmatine. The polypeptide is Agmatinase (speB) (Bacillus cereus (strain ATCC 14579 / DSM 31 / CCUG 7414 / JCM 2152 / NBRC 15305 / NCIMB 9373 / NCTC 2599 / NRRL B-3711)).